We begin with the raw amino-acid sequence, 294 residues long: ATP synthase gamma chain (294 aa).

It belongs to the ATPase gamma chain family. F-type ATPases have 2 components, CF(1) - the catalytic core - and CF(0) - the membrane proton channel. CF(1) has five subunits: alpha(3), beta(3), gamma(1), delta(1), epsilon(1). CF(0) has three main subunits: a, b and c.

The protein localises to the cell inner membrane. Its function is as follows. Produces ATP from ADP in the presence of a proton gradient across the membrane. The gamma chain is believed to be important in regulating ATPase activity and the flow of protons through the CF(0) complex. This Caulobacter sp. (strain K31) protein is ATP synthase gamma chain.